The sequence spans 460 residues: Antizyme inhibitor 2 (460 aa).

Positions Gln117–Leu140 are necessary for polyamine uptake stimulation.

Belongs to the Orn/Lys/Arg decarboxylase class-II family. ODC antizyme inhibitor subfamily. Monomer. Interacts with OAZ1, OAZ2 and OAZ3; this interaction disrupts the interaction between the antizyme and ODC1. Does not form a heterodimer with ODC1. In terms of processing, ubiquitinated, leading to its proteasomal degradation; a process that is reduced in presence of antizymes. May also be degraded through the lysosomal degradative pathway in a proteasomal-independent manner. As to expression, expressed in the neocortex, thalamus, hippocampus, cerebellum, medulla oblongata, gray and white matter. Expressed in neurons, oligodendrocytes, basket, Purkinje and pyramidal cells. Expressed in spermatocytes and Leydig cells of the testis. Expressed in luteal theca cells lining corpus luteum cysts and in hilus cells of the ovary. Expressed in primary and neoplastic mast cells (MC) (at protein level). Highly expressed in brain. Also expressed in testis.

It localises to the nucleus. The protein resides in the cytoplasm. The protein localises to the perinuclear region. Its subcellular location is the membrane. It is found in the cytoplasmic vesicle. It localises to the endoplasmic reticulum-Golgi intermediate compartment. The protein resides in the golgi apparatus. The protein localises to the cis-Golgi network. Its subcellular location is the trans-Golgi network. It is found in the cytoplasmic granule. It localises to the cell projection. The protein resides in the axon. The protein localises to the dendrite. Its subcellular location is the perikaryon. In terms of biological role, antizyme inhibitor (AZI) protein that positively regulates ornithine decarboxylase (ODC) activity and polyamine uptake. AZI is an enzymatically inactive ODC homolog that counteracts the negative effect of ODC antizymes (AZs) OAZ1, OAZ2 and OAZ3 on ODC activity by competing with ODC for antizyme-binding. Inhibits antizyme-dependent ODC degradation and releases ODC monomers from their inactive complex with antizymes, leading to formation of the catalytically active ODC homodimer and restoring polyamine production. Participates in the morphological integrity of the trans-Golgi network (TGN) and functions as a regulator of intracellular secretory vesicle trafficking. The sequence is that of Antizyme inhibitor 2 (AZIN2) from Homo sapiens (Human).